We begin with the raw amino-acid sequence, 225 residues long: Histone H1 (225 aa).

The tract at residues 1–20 (MGPKATSGTRGRGKKVGTKT) is disordered. Residues 23-94 (PLPKYKDLIV…GPAGSIKLLK (72 aa)) form the H15 domain. Positions 95–147 (KAAQPKPEEAKRAAKPAKRVVKAAKPAKAKPAKAAKAAKPAKPVKAAKAASAV) are disordered. Positions 107–127 (AAKPAKRVVKAAKPAKAKPAK) are enriched in basic residues. Low complexity predominate over residues 128–147 (AAKAAKPAKPVKAAKAASAV).

This sequence belongs to the histone H1/H5 family.

The protein localises to the nucleus. The protein resides in the chromosome. In terms of biological role, could act as an H1-type linker histone. This is Histone H1 (HHOA) from Eremothecium gossypii (strain ATCC 10895 / CBS 109.51 / FGSC 9923 / NRRL Y-1056) (Yeast).